Here is a 287-residue protein sequence, read N- to C-terminus: 2-dehydro-3-deoxyphosphooctonate aldolase (287 aa).

This sequence belongs to the KdsA family.

It is found in the cytoplasm. The enzyme catalyses D-arabinose 5-phosphate + phosphoenolpyruvate + H2O = 3-deoxy-alpha-D-manno-2-octulosonate-8-phosphate + phosphate. Its pathway is carbohydrate biosynthesis; 3-deoxy-D-manno-octulosonate biosynthesis; 3-deoxy-D-manno-octulosonate from D-ribulose 5-phosphate: step 2/3. It functions in the pathway bacterial outer membrane biogenesis; lipopolysaccharide biosynthesis. This chain is 2-dehydro-3-deoxyphosphooctonate aldolase, found in Caulobacter vibrioides (strain ATCC 19089 / CIP 103742 / CB 15) (Caulobacter crescentus).